Consider the following 551-residue polypeptide: Harmonin (551 aa).

The interval 1–86 is N-terminal domain; that stretch reads MDRKVAREFR…LTPRRSRKLK (86 aa). PDZ domains are found at residues 87 to 169 and 211 to 293; these read EVRL…HIGL and KVFI…AGAG. The tract at residues 194-532 is mediates interaction with MYO7B; sequence GGRSSLGSPG…QKAWNQGDWI (339 aa). A Phosphoserine modification is found at serine 219. A coiled-coil region spans residues 318–377; the sequence is LMQKRLAMESNKILQEQQEMERQRKKEIAQKAAEENERYRKEMEQIVEEEEKFRKQWEED. The segment at 401–425 is disordered; that stretch reads KPKYDLGVDPEFDPADDLDGGTNKR. The span at 408-419 shows a compositional bias: acidic residues; it reads VDPEFDPADDLD. The region spanning 452 to 536 is the PDZ 3 domain; it reads DVRLLRVKKE…NQGDWIDLVV (85 aa).

As to quaternary structure, part of the IMAC/intermicrovillar adhesion complex/intermicrovillar tip-link complex composed of ANKS4B, MYO7B, USH1C, CDHR2 and CDHR5. Part of a complex composed of USH1C, USH1G and MYO7A. Interacts with F-actin. Interacts with USH2A. Interacts with SLC4A7. Interacts (via PDZ1 domain) with the C-terminus of USHBP1. Interacts (via N-terminus and PDZ 2 domain) with CDH23. Interacts with USH1G. Interacts with MYO7B. Interacts with CDHR2 and CDHR5; may mediate their interaction with MYO7B at the microvilli tip. Interacts (via PDZ 1 domain) with ANKS4B. Interacts (via PDZ 1 domain) with DOCK4.

Its subcellular location is the cytoplasm. It localises to the cytosol. The protein resides in the cytoskeleton. It is found in the cell projection. The protein localises to the microvillus. Its function is as follows. Anchoring/scaffolding protein that is a part of the functional network formed by USH1C, USH1G, CDH23 and MYO7A that mediates mechanotransduction in cochlear hair cells. Required for normal development and maintenance of cochlear hair cell bundles. As part of the intermicrovillar adhesion complex/IMAC plays a role in brush border differentiation, controlling microvilli organization and length. Probably plays a central regulatory role in the assembly of the complex, recruiting CDHR2, CDHR5 and MYO7B to the microvilli tips. This is Harmonin (USH1C) from Bos taurus (Bovine).